A 258-amino-acid polypeptide reads, in one-letter code: Cytochrome P450 1A2 (258 aa).

This sequence belongs to the cytochrome P450 family. Heme is required as a cofactor.

It is found in the endoplasmic reticulum membrane. Its subcellular location is the microsome membrane. The catalysed reaction is an organic molecule + reduced [NADPH--hemoprotein reductase] + O2 = an alcohol + oxidized [NADPH--hemoprotein reductase] + H2O + H(+). Its function is as follows. Cytochromes P450 are a group of heme-thiolate monooxygenases. In liver microsomes, this enzyme is involved in an NADPH-dependent electron transport pathway. It oxidizes a variety of structurally unrelated compounds, including steroids, fatty acids, and xenobiotics. The polypeptide is Cytochrome P450 1A2 (CYP1A2) (Gallus gallus (Chicken)).